A 216-amino-acid polypeptide reads, in one-letter code: Probable transaldolase (216 aa).

K83 functions as the Schiff-base intermediate with substrate in the catalytic mechanism.

The protein belongs to the transaldolase family. Type 3B subfamily.

It localises to the cytoplasm. It catalyses the reaction D-sedoheptulose 7-phosphate + D-glyceraldehyde 3-phosphate = D-erythrose 4-phosphate + beta-D-fructose 6-phosphate. It participates in carbohydrate degradation; pentose phosphate pathway; D-glyceraldehyde 3-phosphate and beta-D-fructose 6-phosphate from D-ribose 5-phosphate and D-xylulose 5-phosphate (non-oxidative stage): step 2/3. Its function is as follows. Transaldolase is important for the balance of metabolites in the pentose-phosphate pathway. The sequence is that of Probable transaldolase from Clostridioides difficile (strain 630) (Peptoclostridium difficile).